Reading from the N-terminus, the 527-residue chain is Phosphoenolpyruvate carboxykinase (ATP) (527 aa).

Residues Arg-55, Tyr-191, and Lys-197 each contribute to the substrate site. ATP-binding positions include Lys-197, His-216, and 232–240 (GLSGTGKTT). 2 residues coordinate Mn(2+): Lys-197 and His-216. Asp-253 contributes to the Mn(2+) binding site. Residues Glu-281, Arg-318, and Thr-443 each coordinate ATP. Arg-318 contacts substrate.

It belongs to the phosphoenolpyruvate carboxykinase (ATP) family. Mn(2+) serves as cofactor.

Its subcellular location is the cytoplasm. It carries out the reaction oxaloacetate + ATP = phosphoenolpyruvate + ADP + CO2. The protein operates within carbohydrate biosynthesis; gluconeogenesis. Functionally, involved in the gluconeogenesis. Catalyzes the conversion of oxaloacetate (OAA) to phosphoenolpyruvate (PEP) through direct phosphoryl transfer between the nucleoside triphosphate and OAA. This Brevibacillus brevis (strain 47 / JCM 6285 / NBRC 100599) protein is Phosphoenolpyruvate carboxykinase (ATP).